A 91-amino-acid chain; its full sequence is Potassium channel toxin BmTXK-beta-2 (91 aa).

The signal sequence occupies residues M1–C19. Positions G20–Q27 are excised as a propeptide. A BetaSPN-type CS-alpha/beta domain is found at Q54–F91. Disulfide bonds link C57–C78, C64–C83, and C68–C85.

The protein belongs to the long chain scorpion toxin family. Class 1 subfamily. Expressed by the venom gland.

It is found in the secreted. Functionally, inhibits voltage-gated potassium channel. The polypeptide is Potassium channel toxin BmTXK-beta-2 (Olivierus martensii (Manchurian scorpion)).